An 886-amino-acid chain; its full sequence is Interference hedgehog (886 aa).

An N-terminal signal peptide occupies residues 1 to 20 (MTLLTSSLLLFSLLTSRLEA). Residues 21–709 (IPVLEKSPAH…ETFNMSPMLT (689 aa)) lie on the Extracellular side of the membrane. Positions 29-38 (AHPAHSAHPA) are enriched in low complexity. Residues 29 to 52 (AHPAHSAHPAHPAHPAHPAHPSPG) form a disordered region. 4 Ig-like C2-type domains span residues 51–148 (PGVR…IARL), 138–238 (PLVV…ERIQ), 258–346 (PHLL…YIKV), and 352–438 (PQIV…LQVN). Disulfide bonds link Cys74–Cys132, Cys179–Cys226, Cys282–Cys330, and Cys373–Cys420. Residues Asn108 and Asn215 are each glycosylated (N-linked (GlcNAc...) asparagine). The tract at residues 432–475 (GTLLQVNPKQIQEPRESGGTHRPKPNQGSRQKQMYPPTPPNVTR) is disordered. Fibronectin type-III domains lie at 467-573 (PPTP…LQPG) and 581-676 (VPEL…TQRP). N-linked (GlcNAc...) asparagine glycosylation occurs at Asn472. Heparin is bound by residues Arg503, Lys507, Lys509, and Arg547. The N-linked (GlcNAc...) asparagine glycan is linked to Asn563. Positions 668-697 (LKQGRTQRPKTSTTEEPTLQMGDRDTTTPS) are disordered. Positions 671–684 (GRTQRPKTSTTEEP) are enriched in polar residues. Residue Asn699 is glycosylated (N-linked (GlcNAc...) asparagine). A helical membrane pass occupies residues 710 to 730 (GTIGGGAVLILLLISTCFCVC). Topologically, residues 731–886 (RRRNSRSRGN…SSGSLNSVGV (156 aa)) are cytoplasmic. Disordered regions lie at residues 734 to 768 (NSRSRGNNPNKPRMAELRDDFVPLGNCSPTKQRQR) and 781 to 886 (QQQQ…SVGV). Low complexity-rich tracts occupy residues 829 to 843 (RAGGSNGSNNGNNNN) and 870 to 886 (SSRSENLSSGSLNSVGV).

The protein belongs to the immunoglobulin superfamily. IHOG family. In terms of assembly, homodimer. Heterotetramer; 2 iHog chains bind 2 hh chains when facilitated by heparin, heparin is required to promote high-affinity interactions between hh and iHog.

The protein localises to the membrane. Functionally, mediates response to the active Hedgehog (Hh) protein signal in embryos, functioning upstream or at the level of patched (ptc). The chain is Interference hedgehog (ihog) from Drosophila melanogaster (Fruit fly).